The primary structure comprises 396 residues: Elongation factor Tu (396 aa).

Residues 10 to 206 form the tr-type G domain; it reads KPHVNVGTIG…ALDSYIPEPT (197 aa). The interval 19–26 is G1; that stretch reads GHVDHGKT. Position 19–26 (19–26) interacts with GTP; the sequence is GHVDHGKT. Threonine 26 lines the Mg(2+) pocket. A G2 region spans residues 60 to 64; it reads GITIS. A G3 region spans residues 81 to 84; it reads DCPG. GTP contacts are provided by residues 81 to 85 and 136 to 139; these read DCPGH and NKAD. Positions 136–139 are G4; that stretch reads NKAD. The interval 174–176 is G5; the sequence is SAL.

The protein belongs to the TRAFAC class translation factor GTPase superfamily. Classic translation factor GTPase family. EF-Tu/EF-1A subfamily. As to quaternary structure, monomer.

Its subcellular location is the cytoplasm. It catalyses the reaction GTP + H2O = GDP + phosphate + H(+). GTP hydrolase that promotes the GTP-dependent binding of aminoacyl-tRNA to the A-site of ribosomes during protein biosynthesis. This chain is Elongation factor Tu, found in Hydrogenovibrio crunogenus (strain DSM 25203 / XCL-2) (Thiomicrospira crunogena).